The sequence spans 654 residues: Protein fem-1 homolog A-A (654 aa).

ANK repeat units lie at residues 2-31 (DLHT…REEL), 40-70 (GGGT…SVEA), 82-111 (EGAP…SVNR), 115-145 (TNST…DLEV), 149-178 (HGHT…QVNR), 182-211 (KGNT…RMER), and 214-243 (YGMT…GHEQ). Position 108 is a phosphoserine (S108). Positions 242–265 (EQLSGTELPGEGSSQVAGNHCSTP) are disordered. Residues 253 to 263 (GSSQVAGNHCS) show a composition bias toward polar residues. TPR repeat units lie at residues 283 to 317 (VEAL…RHQG) and 375 to 408 (SYYI…QQNN). 2 ANK repeats span residues 519-561 (NGFT…DPDS) and 565-594 (DNNT…HMDA). The residue at position 608 (S608) is a Phosphoserine.

The protein belongs to the fem-1 family. As to quaternary structure, component of a CRL2 E3 ubiquitin-protein ligase complex, also named ECS (Elongin BC-CUL2/5-SOCS-box protein) complex, composed of CUL2, Elongin BC (ELOB and ELOC), RBX1 and substrate-specific adapter FEM1A. Interacts with PTGER4. Interacts with NFKB1; the interaction is direct. In terms of processing, phosphorylated; highly phosphorylated in myoblasts and myotubes. Phosphorylation at Ser-108 and Ser-608 promote PGE2-EP4-mediated inhibition of inflammation. Dephosphorylated by protein phosphatase 2A (PP2A). In terms of tissue distribution, preferentially expressed in cardiac muscle, brain and liver (at protein level). Also expressed in skeletal muscle.

It is found in the mitochondrion. The protein localises to the cytoplasm. It participates in protein modification; protein ubiquitination. In terms of biological role, substrate-recognition component of a Cul2-RING (CRL2) E3 ubiquitin-protein ligase complex of the DesCEND (destruction via C-end degrons) pathway, which recognizes a C-degron located at the extreme C terminus of target proteins, leading to their ubiquitination and degradation. The C-degron recognized by the DesCEND pathway is usually a motif of less than ten residues and can be present in full-length proteins, truncated proteins or proteolytically cleaved forms. The CRL2(FEM1A) complex specifically recognizes proteins with an arginine at the C-terminus: recognizes and binds proteins ending with -Lys/Arg-Xaa-Arg and -Lys/Arg-Xaa-Xaa-Arg C-degrons, such as SIL1 or OR51B2, leading to their ubiquitination and degradation. Involved in PGE2-EP4-mediated inhibition of inflammation of macrophages via interaction with NFKB1 and PTGER4. Promotes inflammation in brain microglia through MAP2K4/MKK4-mediated signaling. The polypeptide is Protein fem-1 homolog A-A (Mus musculus (Mouse)).